Here is a 230-residue protein sequence, read N- to C-terminus: Thymidylate kinase (230 aa).

An ATP-binding site is contributed by 23–30; it reads GIDGAGKT.

It belongs to the thymidylate kinase family.

The catalysed reaction is dTMP + ATP = dTDP + ADP. Functionally, phosphorylation of dTMP to form dTDP in both de novo and salvage pathways of dTTP synthesis. The protein is Thymidylate kinase of Ureaplasma parvum serovar 3 (strain ATCC 27815 / 27 / NCTC 11736).